The following is a 179-amino-acid chain: Bifunctional protein PyrR (179 aa).

Positions 100-112 (VILVDDVLFTGRT) match the PRPP-binding motif.

The protein belongs to the purine/pyrimidine phosphoribosyltransferase family. PyrR subfamily.

The enzyme catalyses UMP + diphosphate = 5-phospho-alpha-D-ribose 1-diphosphate + uracil. Regulates the transcription of the pyrimidine nucleotide (pyr) operon in response to exogenous pyrimidines. Functionally, also displays a weak uracil phosphoribosyltransferase activity which is not physiologically significant. The protein is Bifunctional protein PyrR of Actinobacillus succinogenes (strain ATCC 55618 / DSM 22257 / CCUG 43843 / 130Z).